Reading from the N-terminus, the 947-residue chain is Translation initiation factor IF-2 (947 aa).

Residues 55–361 (TKDAQAGSAK…PVTERKFHEL (307 aa)) form a disordered region. Residues 63–73 (AKDKQVAEQKA) show a composition bias toward basic and acidic residues. A compositionally biased stretch (low complexity) spans 76 to 90 (AKATTPQPAAATQEA). Basic and acidic residues-rich tracts occupy residues 103 to 116 (FKAE…EQAA), 125 to 134 (SNDRKSDYRQ), and 170 to 183 (NDGH…DKNR). Over residues 190–204 (RQQDTGRQGQTQAGA) the composition is skewed to low complexity. Composition is skewed to basic and acidic residues over residues 225 to 249 (ARQR…RQEA), 257 to 267 (QTEDKKHREAS), and 294 to 311 (NRPD…DGQK). The segment covering 316 to 334 (SWNSQNQVRNQKNSNWNNN) has biased composition (low complexity). Residues 335 to 345 (KKNKKGKHHKN) show a composition bias toward basic residues. A tr-type G domain is found at 448-617 (ERAPVVTIMG…LLVAEVEELK (170 aa)). A G1 region spans residues 457–464 (GHVDHGKT). 457–464 (GHVDHGKT) is a GTP binding site. The interval 482 to 486 (GITQH) is G2. The interval 503–506 (DTPG) is G3. Residues 503–507 (DTPGH) and 557–560 (NKID) each bind GTP. Residues 557-560 (NKID) form a G4 region. The G5 stretch occupies residues 593 to 595 (SAK).

The protein belongs to the TRAFAC class translation factor GTPase superfamily. Classic translation factor GTPase family. IF-2 subfamily.

It is found in the cytoplasm. Its function is as follows. One of the essential components for the initiation of protein synthesis. Protects formylmethionyl-tRNA from spontaneous hydrolysis and promotes its binding to the 30S ribosomal subunits. Also involved in the hydrolysis of GTP during the formation of the 70S ribosomal complex. The polypeptide is Translation initiation factor IF-2 (Streptococcus equi subsp. zooepidemicus (strain MGCS10565)).